A 363-amino-acid chain; its full sequence is MVDIIFNSSFLGDMGDHSKKKSGFAMCVGCGSQIHDQYILRVSPDLEWHAACLKCAECSQYLDETCTCFVRDGKTYCKRDYVRLFGIKCAKCNLGFSSSDLVMRARDNVYHIECFRCSVCSRQLLPGDEFSLRDEELLCRADHSLLMERTSAGSPISPGHIHSNRSLHLAAEPVTVRAPHRNHVHKQSEKTTRVRTVLNEKQLHTLRTCYNANPRPDALMREQLVEMTGLSPRVIRVWFQNKRCKDKKRSILMKQLQQQQHSDKTVSIFSLQGLTGTPLVARSPIRHDNTVQGNSVEVQTYQPPWKALSEFALQSDLDQPAFQQLVPFSESGSLGNSSGSDVTSLSSHLPDTPNSMVPSPVET.

2 consecutive LIM zinc-binding domains span residues 27–80 (CVGC…CKRD) and 89–143 (CAKC…RADH). The segment at residues 191-250 (TTRVRTVLNEKQLHTLRTCYNANPRPDALMREQLVEMTGLSPRVIRVWFQNKRCKDKKRS) is a DNA-binding region (homeobox). Residues 328-363 (FSESGSLGNSSGSDVTSLSSHLPDTPNSMVPSPVET) form a disordered region. Residues 329-340 (SESGSLGNSSGS) show a composition bias toward low complexity. Residues 341 to 363 (DVTSLSSHLPDTPNSMVPSPVET) are compositionally biased toward polar residues.

The protein resides in the nucleus. Its function is as follows. Binds to one of the cis-acting domain of the insulin gene enhancer. May be involved in subtype specialization of primary motoneurons. The sequence is that of Insulin gene enhancer protein ISL-3 (isl3) from Oncorhynchus tshawytscha (Chinook salmon).